The following is a 378-amino-acid chain: Zinc finger protein DPF3 (378 aa).

Lys99 is covalently cross-linked (Glycyl lysine isopeptide (Lys-Gly) (interchain with G-Cter in SUMO2)). The disordered stretch occupies residues 145 to 193 (VLENDENVEEGNEEEDLEEDIPKRKNRTRGRARGSAGGRRRHDAASQED). Positions 148-163 (NDENVEEGNEEEDLEE) are enriched in acidic residues. Residues 168-186 (RKNRTRGRARGSAGGRRRH) show a composition bias toward basic residues. The C2H2-type zinc-finger motif lies at 198 to 221 (YVCDICGKRYKNRPGLSYHYAHTH). The interval 225–254 (EEGDEAQDQETRSPPNHRNENHRPQKGPDG) is disordered. 2 consecutive PHD-type zinc fingers follow at residues 259-319 (NNYC…CKSC) and 316-366 (CKSC…CWEL). An interaction with HDGFL2 region spans residues 317 to 332 (KSCILCGTSENDDQLL). Residue Gly323 is modified to Phosphoserine.

The protein belongs to the requiem/DPF family. As to quaternary structure, component of the BAF complex, which includes at least actin (ACTB), ARID1A, ARID1B/BAF250, SMARCA2, SMARCA4/BRG1/BAF190A, ACTL6A/BAF53, ACTL6B/BAF53B, SMARCE1/BAF57, SMARCC1/BAF155, SMARCC2/BAF170, SMARCB1/SNF5/INI1, and one or more of SMARCD1/BAF60A, SMARCD2/BAF60B, or SMARCD3/BAF60C. In muscle cells, the BAF complex also contains DPF3. Interacts with acetylated histones H3 and H4. Component of neuron-specific chromatin remodeling complex (nBAF complex) composed of at least, ARID1A/BAF250A or ARID1B/BAF250B, SMARCD1/BAF60A, SMARCD3/BAF60C, SMARCA2/BRM/BAF190B, SMARCA4/BRG1/BAF190A, SMARCB1/BAF47, SMARCC1/BAF155, SMARCE1/BAF57, SMARCC2/BAF170, DPF1/BAF45B, DPF3/BAF45C, ACTL6B/BAF53B and actin. In terms of assembly, interacts with HDGFL2, SMARCA4/BRG1/BAF190A, SMARCC1/BAF155 and SMARCD1/BAF60A. Phosphorylation at Ser-323 enhances its interaction with HDGFL2.

It is found in the nucleus. Its function is as follows. Belongs to the neuron-specific chromatin remodeling complex (nBAF complex). During neural development a switch from a stem/progenitor to a post-mitotic chromatin remodeling mechanism occurs as neurons exit the cell cycle and become committed to their adult state. The transition from proliferating neural stem/progenitor cells to post-mitotic neurons requires a switch in subunit composition of the npBAF and nBAF complexes. As neural progenitors exit mitosis and differentiate into neurons, npBAF complexes which contain ACTL6A/BAF53A and PHF10/BAF45A, are exchanged for homologous alternative ACTL6B/BAF53B and DPF1/BAF45B or DPF3/BAF45C subunits in neuron-specific complexes (nBAF). The npBAF complex is essential for the self-renewal/proliferative capacity of the multipotent neural stem cells. The nBAF complex along with CREST plays a role regulating the activity of genes essential for dendrite growth. Muscle-specific component of the BAF complex, a multiprotein complex involved in transcriptional activation and repression of select genes by chromatin remodeling (alteration of DNA-nucleosome topology). Specifically binds acetylated lysines on histone 3 and 4 (H3K14ac, H3K9ac, H4K5ac, H4K8ac, H4K12ac, H4K16ac). In the complex, it acts as a tissue-specific anchor between histone acetylations and methylations and chromatin remodeling. It thereby probably plays an essential role in heart and skeletal muscle development. Functionally, acts as a regulator of myogenesis in cooperation with HDGFL2. Mediates the interaction of HDGFL2 with the BAF complex. HDGFL2-DPF3a activate myogenic genes by increasing chromatin accessibility through recruitment of SMARCA4/BRG1/BAF190A (ATPase subunit of the BAF complex) to myogenic gene promoters. The protein is Zinc finger protein DPF3 (DPF3) of Homo sapiens (Human).